A 481-amino-acid chain; its full sequence is Probable glycine dehydrogenase (decarboxylating) subunit 2 (481 aa).

Residues 1–23 form a disordered region; sequence MVIFEKTRGKNSPSVMPSKKGDV. N6-(pyridoxal phosphate)lysine is present on Lys-263.

This sequence belongs to the GcvP family. C-terminal subunit subfamily. In terms of assembly, the glycine cleavage system is composed of four proteins: P, T, L and H. In this organism, the P 'protein' is a heterodimer of two subunits. Pyridoxal 5'-phosphate serves as cofactor.

The catalysed reaction is N(6)-[(R)-lipoyl]-L-lysyl-[glycine-cleavage complex H protein] + glycine + H(+) = N(6)-[(R)-S(8)-aminomethyldihydrolipoyl]-L-lysyl-[glycine-cleavage complex H protein] + CO2. The glycine cleavage system catalyzes the degradation of glycine. The P protein binds the alpha-amino group of glycine through its pyridoxal phosphate cofactor; CO(2) is released and the remaining methylamine moiety is then transferred to the lipoamide cofactor of the H protein. The sequence is that of Probable glycine dehydrogenase (decarboxylating) subunit 2 from Francisella philomiragia subsp. philomiragia (strain ATCC 25017 / CCUG 19701 / FSC 153 / O#319-036).